Reading from the N-terminus, the 670-residue chain is Probable potassium transport system protein Kup (670 aa).

Positions 1 to 42 are disordered; the sequence is MSQIPSPNDPPPAGAVPTSGAPAGPSATPAPSPTAGFSLPEH. Residues 15–35 are compositionally biased toward low complexity; that stretch reads AVPTSGAPAGPSATPAPSPTA. The next 12 helical transmembrane spans lie at 51-71, 91-111, 144-164, 180-200, 208-228, 254-274, 290-310, 322-342, 380-400, 406-426, 440-460, and 464-484; these read LAAL…TSPL, VLGV…FKYM, VLLM…IITP, PAME…LFLF, VGAV…VLGV, GWHG…GEAL, WLGL…ALLL, LLAP…AAIV, IYLP…VLGF, LASA…LLFH, AWPL…ANVV, and DGGW…STWK.

The protein belongs to the HAK/KUP transporter (TC 2.A.72) family.

It is found in the cell inner membrane. The enzyme catalyses K(+)(in) + H(+)(in) = K(+)(out) + H(+)(out). In terms of biological role, transport of potassium into the cell. Likely operates as a K(+):H(+) symporter. This Anaeromyxobacter dehalogenans (strain 2CP-C) protein is Probable potassium transport system protein Kup.